The chain runs to 244 residues: Thiol S-methyltransferase TMT1B (244 aa).

The N-terminal stretch at 1–23 (MDILVPLLQLLVLLLTLPLHLMA) is a signal peptide.

The protein belongs to the methyltransferase superfamily. In terms of tissue distribution, expressed in the liver.

The protein resides in the endoplasmic reticulum membrane. Its subcellular location is the lipid droplet. It is found in the microsome. It localises to the cytoplasm. The protein localises to the cytosol. The catalysed reaction is a thiol + S-adenosyl-L-methionine = a methyl thioether + S-adenosyl-L-homocysteine + H(+). Its function is as follows. Thiol S-methyltransferase that catalyzes the transfer of a methyl group from S-adenosyl-L-methionine to alkyl and phenolic thiol-containing acceptor substrates. Together with TMT1B accounts for most of S-thiol methylation activity in the endoplasmic reticulum of hepatocytes. Selectively methylates S-centered nucleophiles from metabolites such as hydrogen sulfide and dithiothreitol. This is Thiol S-methyltransferase TMT1B from Homo sapiens (Human).